Here is a 205-residue protein sequence, read N- to C-terminus: Small ribosomal subunit protein uS4 (205 aa).

The interval 27 to 46 (LNKRDYAPGQHGQRRKGKPS) is disordered. The 61-residue stretch at 118-178 (HGHVLVNGKR…HVDHRLMKGT (61 aa)) folds into the S4 RNA-binding domain.

It belongs to the universal ribosomal protein uS4 family. In terms of assembly, part of the 30S ribosomal subunit. Contacts protein S5. The interaction surface between S4 and S5 is involved in control of translational fidelity.

Functionally, one of the primary rRNA binding proteins, it binds directly to 16S rRNA where it nucleates assembly of the body of the 30S subunit. With S5 and S12 plays an important role in translational accuracy. This Granulibacter bethesdensis (strain ATCC BAA-1260 / CGDNIH1) protein is Small ribosomal subunit protein uS4.